Here is a 1013-residue protein sequence, read N- to C-terminus: Endosome/lysosome-associated apoptosis and autophagy regulator 1 (1013 aa).

The N-terminal stretch at 1–41 (MAEPGHSHHLSARVRGRTERRIPRLWRLLLWAGTAFQVTQG) is a signal peptide. Over 42–910 (TGPELHACKE…ICKTIDFWLK (869 aa)) the chain is Extracellular. N-linked (GlcNAc...) asparagine glycosylation is present at asparagine 153. 3 disulfide bridges follow: cysteine 278-cysteine 295, cysteine 308-cysteine 330, and cysteine 311-cysteine 342. Asparagine 404 and asparagine 672 each carry an N-linked (GlcNAc...) asparagine glycan. In terms of domain architecture, MRH spans 656-858 (NDCTFSRNTP…LWESAAACPL (203 aa)). 4 disulfide bridges follow: cysteine 658–cysteine 704, cysteine 714–cysteine 739, cysteine 808–cysteine 844, and cysteine 820–cysteine 856. A helical transmembrane segment spans residues 911 to 931 (VGISAGTCTAILLTVLTCYFW). Residues 932-1013 (KKNQKLEYKY…TSSGGLDMDL (82 aa)) are Cytoplasmic-facing.

The protein belongs to the ELAPOR family. Interacts with HSPA5; may regulate the function of HSPA5 in apoptosis and cell proliferation. In terms of tissue distribution, expressed in normal endometrium but overexpressed in endometroid tumors.

It localises to the cell membrane. The protein resides in the late endosome membrane. The protein localises to the golgi apparatus. Its subcellular location is the trans-Golgi network membrane. It is found in the lysosome membrane. It localises to the endoplasmic reticulum membrane. Functionally, may protect cells from cell death by inducing cytosolic vacuolization and up-regulating the autophagy pathway. May play a role in apoptosis and cell proliferation through its interaction with HSPA5. This chain is Endosome/lysosome-associated apoptosis and autophagy regulator 1, found in Homo sapiens (Human).